A 500-amino-acid chain; its full sequence is uncharacterized protein (500 aa).

The first 20 residues, 1–20 (MHSIIFKAAVALLGVSTAAG), serve as a signal peptide directing secretion. Residue Asn-43 is glycosylated (N-linked (GlcNAc...) asparagine). One can recognise an FAD-binding PCMH-type domain in the interval 60 to 232 (TALRPDCIIA…TAFTVKTHTQ (173 aa)). Pros-8alpha-FAD histidine is present on His-98. 5 N-linked (GlcNAc...) asparagine glycosylation sites follow: Asn-194, Asn-201, Asn-246, Asn-299, and Asn-414.

It belongs to the oxygen-dependent FAD-linked oxidoreductase family. Requires FAD as cofactor.

The protein resides in the secreted. This is an uncharacterized protein from Arthroderma benhamiae (strain ATCC MYA-4681 / CBS 112371) (Trichophyton mentagrophytes).